Consider the following 326-residue polypeptide: Interleukin-1-binding protein (326 aa).

The N-terminal stretch at 1–18 is a signal peptide; that stretch reads MSIPPVIFLPIFFYSSFV. 3 Ig-like C2-type domains span residues 24–115, 122–208, and 221–322; these read PECI…LNLT, SNID…YDVT, and PPTM…KTVT. Cysteine 48 and cysteine 99 are oxidised to a cystine. N-linked (GlcNAc...) asparagine; by host glycans are attached at residues asparagine 80, asparagine 103, and asparagine 113. The cysteines at positions 143 and 194 are disulfide-linked. A glycan (N-linked (GlcNAc...) asparagine; by host) is linked at asparagine 237. A disulfide bridge links cysteine 242 with cysteine 309.

The protein belongs to the interleukin-1 receptor family. In terms of assembly, interacts with mouse Il1b.

It localises to the secreted. In terms of biological role, may reduce the host inflammatory response by interacting with inteleukin-1 beta (Il1b) and thus decreasing the association between IL1B and its cellular receptor. The sequence is that of Interleukin-1-binding protein (OPG201) from Bos taurus (Bovine).